We begin with the raw amino-acid sequence, 90 residues long: MPAREITIINKLGLHARAAAKFVGVAGRFPCQVPVGRAPDKLVDGKSIMAVMMLAAGKGTQVHLHTXGEQDSDAMDALVELINNFFDEGE.

The 89-residue stretch at 1–89 (MPAREITIIN…ELINNFFDEG (89 aa)) folds into the HPr domain. Residue histidine 15 is the Pros-phosphohistidine intermediate of the active site.

Belongs to the HPr family.

The protein localises to the cytoplasm. Its function is as follows. General (non sugar-specific) component of the phosphoenolpyruvate-dependent sugar phosphotransferase system (sugar PTS). This major carbohydrate active-transport system catalyzes the phosphorylation of incoming sugar substrates concomitantly with their translocation across the cell membrane. The phosphoryl group from phosphoenolpyruvate (PEP) is transferred to the phosphoryl carrier protein HPr by enzyme I. Phospho-HPr then transfers it to the PTS EIIA domain. The chain is Phosphocarrier protein HPr (ptsH) from Pseudomonas putida (Arthrobacter siderocapsulatus).